A 163-amino-acid polypeptide reads, in one-letter code: Transcriptional repressor NrdR (163 aa).

The segment at 3-34 (CPFCRHPDSRVVDSRVSDDGSSIRRRRQCPQC) is a zinc-finger region. An ATP-cone domain is found at 46-136 (LTVIKRSGIG…VYQAFESLDD (91 aa)).

It belongs to the NrdR family. It depends on Zn(2+) as a cofactor.

In terms of biological role, negatively regulates transcription of bacterial ribonucleotide reductase nrd genes and operons by binding to NrdR-boxes. The chain is Transcriptional repressor NrdR from Renibacterium salmoninarum (strain ATCC 33209 / DSM 20767 / JCM 11484 / NBRC 15589 / NCIMB 2235).